A 917-amino-acid polypeptide reads, in one-letter code: GTPase-activating Rap/Ran-GAP domain-like protein 3 (917 aa).

The Rap-GAP domain maps to 185–401 (LLVLEEQEGS…RTLDMLIRSL (217 aa)). The CNH domain maps to 483-792 (PHEVVCADSW…QLVASRSDIY (310 aa)).

The protein belongs to the GARNL3 family.

This is GTPase-activating Rap/Ran-GAP domain-like protein 3 (GARNL3) from Gallus gallus (Chicken).